The following is a 443-amino-acid chain: UDP-glucuronic acid decarboxylase 4 (443 aa).

Alanine 2 carries the N-acetylalanine modification. Residues 2 to 43 (ASELTNRRHEIEQPEAESYYPKPIKPWFVAIRPIRYMLREQR) are Cytoplasmic-facing. The chain crosses the membrane as a helical; Signal-anchor for type II membrane protein span at residues 44–64 (LVFVLVGIAIATLGFTIFSKS). Residues 65 to 443 (SNHQPIPYDV…DSSTTSSSTE (379 aa)) lie on the Lumenal side of the membrane. 151–176 (DNFFTGRKENVMHHFNNPNFEMIRHD) contributes to the NAD(+) binding site. Arginine 260 contributes to the substrate binding site. The Proton acceptor role is filled by tyrosine 263. 263 to 267 (YDEGK) provides a ligand contact to NAD(+). Asparagine 292 contributes to the substrate binding site. Arginine 304 is an NAD(+) binding site. Residues 305 to 309 (VVSNF), 322 to 329 (YGDGKQTR), and 389 to 393 (DPHKR) each bind substrate.

The protein belongs to the NAD(P)-dependent epimerase/dehydratase family. UDP-glucuronic acid decarboxylase subfamily. NAD(+) serves as cofactor.

It is found in the golgi apparatus. It localises to the golgi stack membrane. It catalyses the reaction UDP-alpha-D-glucuronate + H(+) = UDP-alpha-D-xylose + CO2. It functions in the pathway nucleotide-sugar biosynthesis; UDP-alpha-D-xylose biosynthesis; UDP-alpha-D-xylose from UDP-alpha-D-glucuronate: step 1/1. Catalyzes the NAD-dependent decarboxylation of UDP-glucuronic acid to UDP-xylose. Necessary for the biosynthesis of the core tetrasaccharide in glycosaminoglycan biosynthesis. The protein is UDP-glucuronic acid decarboxylase 4 (UXS4) of Arabidopsis thaliana (Mouse-ear cress).